We begin with the raw amino-acid sequence, 240 residues long: Proteasome subunit alpha (240 aa).

The protein belongs to the peptidase T1A family. The 20S proteasome core is composed of 14 alpha and 14 beta subunits that assemble into four stacked heptameric rings, resulting in a barrel-shaped structure. The two inner rings, each composed of seven catalytic beta subunits, are sandwiched by two outer rings, each composed of seven alpha subunits. The catalytic chamber with the active sites is on the inside of the barrel. Has a gated structure, the ends of the cylinder being occluded by the N-termini of the alpha-subunits. Is capped by the proteasome-associated ATPase, ARC.

It localises to the cytoplasm. It participates in protein degradation; proteasomal Pup-dependent pathway. The formation of the proteasomal ATPase ARC-20S proteasome complex, likely via the docking of the C-termini of ARC into the intersubunit pockets in the alpha-rings, may trigger opening of the gate for substrate entry. Interconversion between the open-gate and close-gate conformations leads to a dynamic regulation of the 20S proteasome proteolysis activity. Component of the proteasome core, a large protease complex with broad specificity involved in protein degradation. The sequence is that of Proteasome subunit alpha from Frankia casuarinae (strain DSM 45818 / CECT 9043 / HFP020203 / CcI3).